Reading from the N-terminus, the 523-residue chain is Maintenance of mitochondrial morphology protein 1 (523 aa).

Residues 1–43 (MAGSTSASLQTPYFPSSTQINPVRVDHTLPLPPAQPSLSFTQG) are Lumenal-facing. A helical membrane pass occupies residues 44–64 (LLVGQLSVVLLIGAFIKFFIF). At 65–523 (GEAPPPPSRG…GSMPDTVTET (459 aa)) the chain is on the cytoplasmic side. Disordered regions lie at residues 70 to 118 (PPSR…SSST), 295 to 349 (TSDQ…SKHG), 420 to 473 (RTGL…IDRG), and 492 to 523 (GGHQ…VTET). 3 stretches are compositionally biased toward polar residues: residues 74–96 (GLSN…TDSS), 105–118 (STSN…SSST), and 295–312 (TSDQ…TTSE). Residues 151–412 (QPESLDWFNV…EPRVQVVGLP (262 aa)) form the SMP-LTD domain. Residues 449 to 467 (GVSGGGGSGGGSGGGGGSM) show a composition bias toward gly residues.

The protein belongs to the MMM1 family. Homodimer. Component of the ER-mitochondria encounter structure (ERMES) or MDM complex, composed of MMM1, MDM10, MDM12 and MDM34. An MMM1 homodimer associates with one molecule of MDM12 on each side in a pairwise head-to-tail manner, and the SMP-LTD domains of MMM1 and MDM12 generate a continuous hydrophobic tunnel for phospholipid trafficking.

The protein localises to the endoplasmic reticulum membrane. Its function is as follows. Component of the ERMES/MDM complex, which serves as a molecular tether to connect the endoplasmic reticulum (ER) and mitochondria. Components of this complex are involved in the control of mitochondrial shape and protein biogenesis, and function in nonvesicular lipid trafficking between the ER and mitochondria. The MDM12-MMM1 subcomplex functions in the major beta-barrel assembly pathway that is responsible for biogenesis of all outer membrane beta-barrel proteins, and acts in a late step after the SAM complex. The MDM10-MDM12-MMM1 subcomplex further acts in the TOM40-specific pathway after the action of the MDM12-MMM1 complex. Essential for establishing and maintaining the structure of mitochondria and maintenance of mtDNA nucleoids. This chain is Maintenance of mitochondrial morphology protein 1, found in Paracoccidioides brasiliensis (strain Pb03).